We begin with the raw amino-acid sequence, 286 residues long: Phosphate import ATP-binding protein PstB (286 aa).

In terms of domain architecture, ABC transporter spans 40 to 281 (VVARDFSIYY…PKDSMTEDYI (242 aa)). Position 72–79 (72–79 (GPSGCGKS)) interacts with ATP.

It belongs to the ABC transporter superfamily. Phosphate importer (TC 3.A.1.7) family. In terms of assembly, the complex is composed of two ATP-binding proteins (PstB), two transmembrane proteins (PstC and PstA) and a solute-binding protein (PstS).

The protein localises to the cell inner membrane. It catalyses the reaction phosphate(out) + ATP + H2O = ADP + 2 phosphate(in) + H(+). Its function is as follows. Part of the ABC transporter complex PstSACB involved in phosphate import. Responsible for energy coupling to the transport system. This Chlorobaculum tepidum (strain ATCC 49652 / DSM 12025 / NBRC 103806 / TLS) (Chlorobium tepidum) protein is Phosphate import ATP-binding protein PstB.